Consider the following 459-residue polypeptide: Cobyrinate a,c-diamide synthase (459 aa).

The region spanning 252–446 (TLALADDEAF…LHVHFAQRPE (195 aa)) is the GATase cobBQ-type domain. The active-site Nucleophile is the Cys-334.

Belongs to the CobB/CbiA family. Monomer. The cofactor is Mg(2+).

The enzyme catalyses cob(II)yrinate + 2 L-glutamine + 2 ATP + 2 H2O = cob(II)yrinate a,c diamide + 2 L-glutamate + 2 ADP + 2 phosphate + 2 H(+). It functions in the pathway cofactor biosynthesis; adenosylcobalamin biosynthesis; cob(II)yrinate a,c-diamide from sirohydrochlorin (anaerobic route): step 10/10. Functionally, catalyzes the ATP-dependent amidation of the two carboxylate groups at positions a and c of cobyrinate, using either L-glutamine or ammonia as the nitrogen source. Is able to use other nucleotide triphosphates as substrate, such as GTP or UTP, although less efficiently than ATP. The polypeptide is Cobyrinate a,c-diamide synthase (Salmonella typhimurium (strain LT2 / SGSC1412 / ATCC 700720)).